Consider the following 211-residue polypeptide: Cytochrome c biogenesis ATP-binding export protein CcmA 2 (211 aa).

In terms of domain architecture, ABC transporter spans 6–208; it reads LEARELGVRR…GAVLDLATDA (203 aa). 38 to 45 contacts ATP; it reads GPNGAGKT.

The protein belongs to the ABC transporter superfamily. CcmA exporter (TC 3.A.1.107) family. As to quaternary structure, the complex is composed of two ATP-binding proteins (CcmA) and two transmembrane proteins (CcmB).

Its subcellular location is the cell inner membrane. The enzyme catalyses heme b(in) + ATP + H2O = heme b(out) + ADP + phosphate + H(+). Functionally, part of the ABC transporter complex CcmAB involved in the biogenesis of c-type cytochromes; once thought to export heme, this seems not to be the case, but its exact role is uncertain. Responsible for energy coupling to the transport system. This is Cytochrome c biogenesis ATP-binding export protein CcmA 2 from Cupriavidus metallidurans (strain ATCC 43123 / DSM 2839 / NBRC 102507 / CH34) (Ralstonia metallidurans).